The chain runs to 689 residues: Poly(A)-specific ribonuclease PARN (689 aa).

The a divalent metal cation site is built by Asp-66, Glu-68, Asp-354, and Asp-459.

Belongs to the CAF1 family. Requires a divalent metal cation as cofactor. In terms of tissue distribution, widely expressed. Expressed in roots, stems, leaves and flowers.

It localises to the nucleus. It is found in the cytoplasm. The enzyme catalyses Exonucleolytic cleavage of poly(A) to 5'-AMP.. 3'-exoribonuclease that has a preference for poly(A) tails of mRNAs, thereby efficiently degrading poly(A) tails. Exonucleolytic degradation of the poly(A) tail is often the first step in the decay of eukaryotic mRNAs. Essential for early development, possibly by participating in silencing certain maternal mRNAs translationally. May have a pivotal role in stress response. In Arabidopsis thaliana (Mouse-ear cress), this protein is Poly(A)-specific ribonuclease PARN (PARN).